Consider the following 321-residue polypeptide: UDP-N-acetylenolpyruvoylglucosamine reductase (321 aa).

The region spanning 39–205 (RTGGLAELFY…TAALLEGEPG (167 aa)) is the FAD-binding PCMH-type domain. R185 is an active-site residue. Residue S234 is the Proton donor of the active site. Residue E304 is part of the active site.

This sequence belongs to the MurB family. The cofactor is FAD.

It is found in the cytoplasm. It catalyses the reaction UDP-N-acetyl-alpha-D-muramate + NADP(+) = UDP-N-acetyl-3-O-(1-carboxyvinyl)-alpha-D-glucosamine + NADPH + H(+). The protein operates within cell wall biogenesis; peptidoglycan biosynthesis. In terms of biological role, cell wall formation. This is UDP-N-acetylenolpyruvoylglucosamine reductase from Bartonella quintana (strain Toulouse) (Rochalimaea quintana).